We begin with the raw amino-acid sequence, 416 residues long: Lipase (416 aa).

The signal sequence occupies residues 1–28; that stretch reads MKCCRIMFVLLGLWFVFGLSVPGGRTEA. The Nucleophile role is filled by Ser-141. Position 314 (Gly-314) interacts with Ca(2+). Asp-345 (charge relay system) is an active-site residue. Residue Asp-385 participates in Ca(2+) binding. The active-site Charge relay system is His-386. Residues Glu-388, Asp-393, and Pro-394 each coordinate Ca(2+).

The protein belongs to the AB hydrolase superfamily. As to quaternary structure, homodimer.

It localises to the secreted. The catalysed reaction is a triacylglycerol + H2O = a diacylglycerol + a fatty acid + H(+). Activity is inhibited by zinc and iron ions, and activated in vitro in 25% v/v DMSO and acetone. Its function is as follows. Triacylglycerol hydrolase that shows hydrolysis preference towards some of the natural oils such as olive, sunflower and corn oils. The sequence is that of Lipase from Bacillus sp.